The sequence spans 441 residues: Putative F-box protein At1g33530 (441 aa).

The F-box domain maps to 91 to 137; the sequence is TTLAVELPDVLVEEILQRLPVKYLVRLKSISKGWKSLIESDHLAEKH.

The sequence is that of Putative F-box protein At1g33530 from Arabidopsis thaliana (Mouse-ear cress).